Here is a 213-residue protein sequence, read N- to C-terminus: Ras-related protein Rab-25 (213 aa).

The GTP site is built by Ser-21, Gly-24, Lys-25, Thr-26, Asn-27, Ser-38, His-39, Thr-43, and Thr-44. Thr-26 contributes to the Mg(2+) binding site. 2 short sequence motifs (switch) span residues 35-49 (NEFS…GVEF) and 67-84 (DTAG…YYRG). Thr-44 and Asp-67 together coordinate Mg(2+). Gly-70, Asn-125, Lys-126, Asp-128, Ala-156, and Leu-157 together coordinate GTP. S-geranylgeranyl cysteine attachment occurs at residues Cys-209 and Cys-210. Cys-210 carries the post-translational modification Cysteine methyl ester. Residues 211-213 (ISL) constitute a propeptide, removed in mature form.

Belongs to the small GTPase superfamily. Rab family. As to quaternary structure, interacts (GTP-bound form) with RAB11FIP1, RAB11FIP2, RAB11FIP3 and RAB11FIP4. Interacts (via the hypervariable C-terminal region) with ITGB1 (via the cytoplasmic region); the interaction is GTP-dependent. Interacts with ITGAV. Associates with the integrin alpha-V/beta-1 heterodimer. Interacts with VPS33B. The cofactor is Mg(2+). In terms of tissue distribution, expression is restricted to epithelial cells. Expressed in ovarian epithelium (NOE) and breast tissue. Expressed in ovarian cancer; expression is increased relative to NOE cells. Expression in ovarian cancer is stage dependent, with stage III and stage IV showing higher levels than early stage cancers. Expressed in breast cancer; expression is increased relative to normal breast tissue.

It is found in the cell membrane. It localises to the cytoplasmic vesicle. The protein localises to the cell projection. Its subcellular location is the pseudopodium membrane. The enzyme catalyses GTP + H2O = GDP + phosphate + H(+). Its activity is regulated as follows. Regulated by guanine nucleotide exchange factors (GEFs) which promote the exchange of bound GDP for free GTP. Regulated by GTPase activating proteins (GAPs) which increase the GTP hydrolysis activity. Inhibited by GDP dissociation inhibitors (GDIs) which prevent Rab-GDP dissociation. Its function is as follows. The small GTPases Rab are key regulators of intracellular membrane trafficking, from the formation of transport vesicles to their fusion with membranes. Rabs cycle between an inactive GDP-bound form and an active GTP-bound form that is able to recruit to membranes different set of downstream effectors directly responsible for vesicle formation, movement, tethering and fusion. RAB25 regulates epithelial cell differentiation, proliferation and survival, thereby playing key roles in tumorigenesis. Promotes invasive migration of cells in which it functions to localize and maintain integrin alpha-V/beta-1 at the tips of extending pseudopodia. Involved in the regulation of epithelial morphogenesis through the control of CLDN4 expression and localization at tight junctions. May selectively regulate the apical recycling pathway. Together with MYO5B regulates transcytosis. The chain is Ras-related protein Rab-25 from Homo sapiens (Human).